A 210-amino-acid chain; its full sequence is uncharacterized protein (210 aa).

The next 5 membrane-spanning stretches (helical) occupy residues 42–62 (ITLG…VLFV), 66–86 (ALHG…GFLM), 126–146 (VVVY…EMWQ), 147–167 (IILA…VISL), and 189–209 (AGIV…NEII).

This sequence belongs to the Rht family.

It is found in the cell membrane. This is an uncharacterized protein from Haemophilus influenzae (strain ATCC 51907 / DSM 11121 / KW20 / Rd).